Here is a 377-residue protein sequence, read N- to C-terminus: 3-dehydroquinate synthase (377 aa).

Residues 115–119 (GVIGD), 139–140 (TS), K152, and K161 each bind NAD(+). Positions 194, 256, and 275 each coordinate Zn(2+).

This sequence belongs to the sugar phosphate cyclases superfamily. Dehydroquinate synthase family. NAD(+) serves as cofactor. Requires Co(2+) as cofactor. It depends on Zn(2+) as a cofactor.

The protein resides in the cytoplasm. It catalyses the reaction 7-phospho-2-dehydro-3-deoxy-D-arabino-heptonate = 3-dehydroquinate + phosphate. It functions in the pathway metabolic intermediate biosynthesis; chorismate biosynthesis; chorismate from D-erythrose 4-phosphate and phosphoenolpyruvate: step 2/7. Its function is as follows. Catalyzes the conversion of 3-deoxy-D-arabino-heptulosonate 7-phosphate (DAHP) to dehydroquinate (DHQ). The protein is 3-dehydroquinate synthase of Rhizobium meliloti (strain 1021) (Ensifer meliloti).